The chain runs to 1030 residues: Kinesin-related protein 6 (1030 aa).

An SAM domain is found at Phe3–Gln66. Disordered regions lie at residues Gln66–Met164 and Arg178–Asp308. Over residues Pro68 to Ser80 the composition is skewed to polar residues. Composition is skewed to low complexity over residues Asn81–Asn117, Thr125–Met164, Tyr181–Ser197, and Gln225–Asp238. Residues Phe239 to Asp290 are compositionally biased toward acidic residues. The 323-residue stretch at Arg453–Leu775 folds into the Kinesin motor domain. Gly543–Thr550 provides a ligand contact to ATP. 3 stretches are compositionally biased toward low complexity: residues Ile826–Pro839, Gln849–Pro906, and Pro981–Gln1009. Disordered stretches follow at residues Ile826–Phe915 and Pro981–Asn1030.

Belongs to the TRAFAC class myosin-kinesin ATPase superfamily. Kinesin family.

The protein localises to the cytoplasm. The protein resides in the cytoskeleton. Functionally, microtubule-associated force-producing protein that plays a role in organelle transport. Its motor activity is directed toward the microtubule's plus end. The protein is Kinesin-related protein 6 (kif6) of Dictyostelium discoideum (Social amoeba).